We begin with the raw amino-acid sequence, 233 residues long: Putative cobalt transport protein CbiM (233 aa).

6 consecutive transmembrane segments (helical) span residues proline 9–valine 29, proline 43–valine 63, leucine 75–phenylalanine 95, threonine 107–tyrosine 127, threonine 138–valine 158, and isoleucine 177–isoleucine 197.

Belongs to the CbiM family. As to quaternary structure, forms an energy-coupling factor (ECF) transporter complex composed of an ATP-binding protein (A component, CbiO), a transmembrane protein (T component, CbiQ) and 2 possible substrate-capture proteins (S components, CbiM and CbiN) of unknown stoichimetry.

It localises to the cell membrane. Its pathway is cofactor biosynthesis; adenosylcobalamin biosynthesis. In terms of biological role, part of the energy-coupling factor (ECF) transporter complex CbiMNOQ involved in cobalt import. The protein is Putative cobalt transport protein CbiM of Methanocaldococcus jannaschii (strain ATCC 43067 / DSM 2661 / JAL-1 / JCM 10045 / NBRC 100440) (Methanococcus jannaschii).